A 203-amino-acid polypeptide reads, in one-letter code: Large ribosomal subunit protein bL25 (203 aa).

Belongs to the bacterial ribosomal protein bL25 family. CTC subfamily. Part of the 50S ribosomal subunit; part of the 5S rRNA/L5/L18/L25 subcomplex. Contacts the 5S rRNA. Binds to the 5S rRNA independently of L5 and L18.

Its function is as follows. This is one of the proteins that binds to the 5S RNA in the ribosome where it forms part of the central protuberance. The polypeptide is Large ribosomal subunit protein bL25 (Xanthobacter autotrophicus (strain ATCC BAA-1158 / Py2)).